The primary structure comprises 116 residues: Iron-sulfur cluster insertion protein ErpA (116 aa).

Residues C44, C108, and C110 each coordinate iron-sulfur cluster.

It belongs to the HesB/IscA family. Homodimer. Iron-sulfur cluster is required as a cofactor.

Functionally, required for insertion of 4Fe-4S clusters for at least IspG. The chain is Iron-sulfur cluster insertion protein ErpA from Pseudomonas fluorescens (strain ATCC BAA-477 / NRRL B-23932 / Pf-5).